The primary structure comprises 586 residues: CTP synthase 2 (586 aa).

Residues 300-554 (SIALVGKYTK…LAATGNLNAH (255 aa)) form the Glutamine amidotransferase type-1 domain. Active-site for GATase activity residues include Cys399, His526, and Glu528. Phosphoserine is present on residues Ser568, Ser571, and Ser574.

This sequence belongs to the CTP synthase family.

The enzyme catalyses UTP + L-glutamine + ATP + H2O = CTP + L-glutamate + ADP + phosphate + 2 H(+). It functions in the pathway pyrimidine metabolism; CTP biosynthesis via de novo pathway; CTP from UDP: step 2/2. In terms of biological role, catalyzes the ATP-dependent amination of UTP to CTP with either L-glutamine or ammonia as the source of nitrogen. Constitutes the rate-limiting enzyme in the synthesis of cytosine nucleotides. In Mus musculus (Mouse), this protein is CTP synthase 2 (Ctps2).